Reading from the N-terminus, the 156-residue chain is CRIB domain-containing protein RIC10 (156 aa).

The CRIB domain maps to 30–43; it reads IGFPTDVKHVAHIG. The segment covering 68-77 has biased composition (polar residues); that stretch reads RPSSFSNARP. Residues 68–156 are disordered; that stretch reads RPSSFSNARP…SYKSTVSRLI (89 aa). Residues 78–96 are compositionally biased toward low complexity; the sequence is STSFFTSSSSTDFDQGSSQ. A compositionally biased stretch (basic residues) spans 117–128; that stretch reads NNKKKSSRRKKS. Positions 129-156 are enriched in low complexity; it reads SSSSSSPKSSRSSVLSKSSYKSTVSRLI.

Expressed in roots, leaves, flowers and pollen.

The protein resides in the cytoplasm. Its function is as follows. Functions as a downstream effector of Rho-related GTP binding proteins of the 'Rho of Plants' (ROPs) family. Participates in the propagation of ROP GTPase signals in specific cellular responses. Is involved in pollen tube growth regulation. The sequence is that of CRIB domain-containing protein RIC10 (RIC10) from Arabidopsis thaliana (Mouse-ear cress).